A 585-amino-acid chain; its full sequence is Mitochondrial sodium/calcium exchanger protein (585 aa).

An N-terminal signal peptide occupies residues Met-1–Gly-26. The Extracellular portion of the chain corresponds to Ala-27–Leu-95. N-linked (GlcNAc...) asparagine glycosylation is present at Asn-46. Residues Leu-96–Val-116 form a helical membrane-spanning segment. The Cytoplasmic portion of the chain corresponds to Thr-117 to Ala-140. Residues Gly-141–Phe-161 traverse the membrane as a helical segment. Topologically, residues Ser-162 to Gly-168 are extracellular. A helical membrane pass occupies residues Leu-169–Ile-189. At Thr-190–Asp-205 the chain is on the cytoplasmic side. A helical transmembrane segment spans residues Ile-206–Thr-226. A topological domain (extracellular) is located at residue Leu-227. A helical transmembrane segment spans residues Val-228–Cys-247. The Cytoplasmic portion of the chain corresponds to Thr-248–Lys-325. Position 258 is a phosphoserine; by PKA (Ser-258). The helical transmembrane segment at Leu-326–Asp-346 threads the bilayer. At Pro-347 to Cys-360 the chain is on the extracellular side. A helical membrane pass occupies residues Leu-361–Ile-381. The Cytoplasmic portion of the chain corresponds to Tyr-382–Glu-383. The helical transmembrane segment at Ile-384–Val-404 threads the bilayer. Over Thr-405–Arg-416 the chain is Extracellular. The helical transmembrane segment at Leu-417 to Ala-437 threads the bilayer. At Thr-438–Arg-445 the chain is on the cytoplasmic side. A helical transmembrane segment spans residues Ser-446 to Gly-466. Residues Asn-467–Cys-491 lie on the Extracellular side of the membrane. A helical transmembrane segment spans residues Phe-492–Val-512. Residues Arg-513–Gly-525 lie on the Cytoplasmic side of the membrane. A helical membrane pass occupies residues Leu-526 to Val-546. The Extracellular segment spans residues Pro-547–Leu-559. The helical transmembrane segment at Cys-560–Ile-580 threads the bilayer. Residues His-581–Asp-585 lie on the Cytoplasmic side of the membrane.

The protein belongs to the Ca(2+):cation antiporter (CaCA) (TC 2.A.19) family. SLC24A subfamily. Post-translationally, phosphorylation at Ser-258 by PKA prevents calcium overload. As to expression, widely expressed. Present at higher level in pancreas, stomach, skeletal muscle and skin (at protein level). Ubiquitously expressed.

The protein localises to the mitochondrion inner membrane. The catalysed reaction is Ca(2+)(in) + 3 Na(+)(out) = Ca(2+)(out) + 3 Na(+)(in). The enzyme catalyses 3 Li(+)(out) + Ca(2+)(in) = 3 Li(+)(in) + Ca(2+)(out). Its activity is regulated as follows. Inhibited by the sodium/calcium exchanger inhibitor CGP-37157. Strongly inhibited by zinc. In terms of biological role, mitochondrial sodium/calcium antiporter that mediates sodium-dependent calcium efflux from mitochondrion, by mediating the exchange of 3 sodium ions per 1 calcium ion. Plays a central role in mitochondrial calcium homeostasis by mediating mitochondrial calcium extrusion: calcium efflux is essential for mitochondrial function and cell survival, notably in cardiomyocytes. Regulates rates of glucose-dependent insulin secretion in pancreatic beta-cells during the first phase of insulin secretion: acts by mediating efflux of calcium from mitochondrion, thereby affecting cytoplasmic calcium responses. Required for store-operated Ca(2+) entry (SOCE) and Ca(2+) release-activated Ca(2+) (CRAC) channel regulation: sodium transport by SLC8B1 leads to promote calcium-shuttling that modulates mitochondrial redox status, thereby regulating SOCE activity. Involved in B-lymphocyte chemotaxis. Able to transport Ca(2+) in exchange of either Li(+) or Na(+), explaining how Li(+) catalyzes Ca(2+) exchange. In contrast to other members of the family its function is independent of K(+). The sequence is that of Mitochondrial sodium/calcium exchanger protein from Rattus norvegicus (Rat).